We begin with the raw amino-acid sequence, 328 residues long: GMP reductase (328 aa).

Cysteine 177 (thioimidate intermediate) is an active-site residue. 206–229 (IVADGGIRYNGDIAKSIRFGASMV) lines the NADP(+) pocket.

This sequence belongs to the IMPDH/GMPR family. GuaC type 2 subfamily.

It carries out the reaction IMP + NH4(+) + NADP(+) = GMP + NADPH + 2 H(+). Catalyzes the irreversible NADPH-dependent deamination of GMP to IMP. It functions in the conversion of nucleobase, nucleoside and nucleotide derivatives of G to A nucleotides, and in maintaining the intracellular balance of A and G nucleotides. The protein is GMP reductase of Levilactobacillus brevis (strain ATCC 367 / BCRC 12310 / CIP 105137 / JCM 1170 / LMG 11437 / NCIMB 947 / NCTC 947) (Lactobacillus brevis).